The sequence spans 100 residues: Putative insulin-like peptide beta-type 6 (100 aa).

The N-terminal stretch at 1 to 18 (MHSIVALMLIGTILPIAA) is a signal peptide. 4 disulfides stabilise this stretch: Cys54–Cys83, Cys66–Cys96, Cys70–Cys97, and Cys82–Cys87.

The protein belongs to the insulin family.

It is found in the secreted. In Caenorhabditis elegans, this protein is Putative insulin-like peptide beta-type 6 (ins-5).